Reading from the N-terminus, the 464-residue chain is ATP synthase subunit beta (464 aa).

153–160 (GGAGVGKT) contacts ATP.

Belongs to the ATPase alpha/beta chains family. In terms of assembly, F-type ATPases have 2 components, CF(1) - the catalytic core - and CF(0) - the membrane proton channel. CF(1) has five subunits: alpha(3), beta(3), gamma(1), delta(1), epsilon(1). CF(0) has three main subunits: a(1), b(2) and c(9-12). The alpha and beta chains form an alternating ring which encloses part of the gamma chain. CF(1) is attached to CF(0) by a central stalk formed by the gamma and epsilon chains, while a peripheral stalk is formed by the delta and b chains.

Its subcellular location is the cell inner membrane. It catalyses the reaction ATP + H2O + 4 H(+)(in) = ADP + phosphate + 5 H(+)(out). Its function is as follows. Produces ATP from ADP in the presence of a proton gradient across the membrane. The catalytic sites are hosted primarily by the beta subunits. The sequence is that of ATP synthase subunit beta from Burkholderia ambifaria (strain ATCC BAA-244 / DSM 16087 / CCUG 44356 / LMG 19182 / AMMD) (Burkholderia cepacia (strain AMMD)).